The sequence spans 353 residues: Rhodopsin (353 aa).

Residues 1–36 (MNGTEGPFFYVPMLNTTGIVRSPYDYPQYYLVNPAA) are Extracellular-facing. N2 and N15 each carry an N-linked (GlcNAc...) asparagine glycan. Residues 37 to 61 (YAALGAYMFLLILLGFPINFLTLYV) traverse the membrane as a helical segment. Residues 62-73 (TIEHKKLRTPLN) are Cytoplasmic-facing. The chain crosses the membrane as a helical span at residues 74–96 (YILLNLAVANLFMVFGGFTTTMY). Over 97-110 (TSMHGYFVLGRLGC) the chain is Extracellular. A disulfide bridge links C110 with C187. A helical transmembrane segment spans residues 111–133 (NLEGFFATLGGEIGLWSLVVLAI). The 'Ionic lock' involved in activated form stabilization motif lies at 134–136 (ERW). The Cytoplasmic segment spans residues 134-152 (ERWMVVCKPISNFRFGENH). The helical transmembrane segment at 153-173 (AIMGLAFTWIMACACAVPPLV) threads the bilayer. Over 174–202 (GWSRYIPEGMQCSCGVDYYTRAEGFNNES) the chain is Extracellular. Residue N200 is glycosylated (N-linked (GlcNAc...) asparagine). A helical transmembrane segment spans residues 203–224 (FVVYMFICHFLIPMAVVFFCYG). Residues 225-252 (RLLCAVKEAAAAQQESETTQRAEREVTR) are Cytoplasmic-facing. A helical transmembrane segment spans residues 253-274 (MVVIMVVAFLICWLPYAGVAWW). The Extracellular portion of the chain corresponds to 275–286 (IFTHQGSEFGPV). A helical membrane pass occupies residues 287–308 (FMTIPAFFAKSSSIYNPLIYIC). K296 bears the N6-(retinylidene)lysine mark. The Cytoplasmic portion of the chain corresponds to 309–353 (MNKQFRHCMITTLCCGKNPFEEEEGASTTSKTEASSVSSSSVSPA). S-palmitoyl cysteine attachment occurs at residues C322 and C323. A disordered region spans residues 330 to 353 (EEEGASTTSKTEASSVSSSSVSPA). Residues 334–353 (ASTTSKTEASSVSSSSVSPA) show a composition bias toward low complexity.

The protein belongs to the G-protein coupled receptor 1 family. Opsin subfamily. Phosphorylated on some or all of the serine and threonine residues present in the C-terminal region. Post-translationally, contains one covalently linked retinal chromophore.

The protein localises to the membrane. Its subcellular location is the cell projection. It is found in the cilium. The protein resides in the photoreceptor outer segment. Photoreceptor required for image-forming vision at low light intensity. While most salt water fish species use retinal as chromophore, most freshwater fish use 3-dehydroretinal, or a mixture of retinal and 3-dehydroretinal. Light-induced isomerization of 11-cis to all-trans retinal triggers a conformational change that activates signaling via G-proteins. Subsequent receptor phosphorylation mediates displacement of the bound G-protein alpha subunit by arrestin and terminates signaling. This chain is Rhodopsin (rho), found in Tetraodon nigroviridis (Spotted green pufferfish).